A 402-amino-acid polypeptide reads, in one-letter code: Queuine tRNA-ribosyltransferase-like protein (402 aa).

It belongs to the queuine tRNA-ribosyltransferase family.

This is Queuine tRNA-ribosyltransferase-like protein from Theileria annulata.